A 565-amino-acid chain; its full sequence is Arginine--tRNA ligase (565 aa).

The 'HIGH' region motif lies at 128–138 (ANPTGPLHVGH).

It belongs to the class-I aminoacyl-tRNA synthetase family. In terms of assembly, monomer.

It is found in the cytoplasm. It catalyses the reaction tRNA(Arg) + L-arginine + ATP = L-arginyl-tRNA(Arg) + AMP + diphosphate. The protein is Arginine--tRNA ligase of Delftia acidovorans (strain DSM 14801 / SPH-1).